The primary structure comprises 435 residues: Succinate--CoA ligase [ADP-forming] subunit beta, mitochondrial (435 aa).

The transit peptide at 1-20 (MIGRISQPLLNTSQKFMAPA) directs the protein to the mitochondrion. The ATP-grasp domain maps to 32–259 (MKILQNYEIK…SNAEFRQAKL (228 aa)). ATP contacts are provided by residues Lys-69 and 76–78 (GRG). 2 residues coordinate Mg(2+): Asn-229 and Asp-243. Substrate is bound by residues Asn-294 and 352-354 (GIM).

Belongs to the succinate/malate CoA ligase beta subunit family. ATP-specific subunit beta subfamily. Heterodimer of an alpha and a beta subunit. The beta subunit determines specificity for ATP. The cofactor is Mg(2+).

It is found in the mitochondrion. The catalysed reaction is succinate + ATP + CoA = succinyl-CoA + ADP + phosphate. The protein operates within carbohydrate metabolism; tricarboxylic acid cycle; succinate from succinyl-CoA (ligase route): step 1/1. Functionally, ATP-specific succinyl-CoA synthetase functions in the citric acid cycle (TCA), coupling the hydrolysis of succinyl-CoA to the synthesis of ATP and thus represents the only step of substrate-level phosphorylation in the TCA. The beta subunit provides nucleotide specificity of the enzyme and binds the substrate succinate, while the binding sites for coenzyme A and phosphate are found in the alpha subunit. This chain is Succinate--CoA ligase [ADP-forming] subunit beta, mitochondrial, found in Caenorhabditis elegans.